Reading from the N-terminus, the 181-residue chain is Adenine phosphoribosyltransferase (181 aa).

This sequence belongs to the purine/pyrimidine phosphoribosyltransferase family. In terms of assembly, homodimer.

The protein resides in the cytoplasm. The catalysed reaction is AMP + diphosphate = 5-phospho-alpha-D-ribose 1-diphosphate + adenine. The protein operates within purine metabolism; AMP biosynthesis via salvage pathway; AMP from adenine: step 1/1. Functionally, catalyzes a salvage reaction resulting in the formation of AMP, that is energically less costly than de novo synthesis. The sequence is that of Adenine phosphoribosyltransferase from Methylobacterium nodulans (strain LMG 21967 / CNCM I-2342 / ORS 2060).